A 648-amino-acid chain; its full sequence is PTS system N-acetylglucosamine-specific EIICBA component (648 aa).

At Met-1 the chain carries N-formylmethionine. The region spanning 1 to 371 (MNILGFFQRL…FNLKTPGRED (371 aa)) is the PTS EIIC type-1 domain. The next 12 membrane-spanning stretches (helical) occupy residues 16–36 (LPIA…PDLL), 38–58 (VAFI…IFAI), 70–90 (GAAA…MVTI), 92–112 (PEIN…GAAY), 132–152 (FVPI…GYVW), 159–179 (IHAG…IFGF), 192–212 (VLNT…GTVF), 232–252 (GFFP…YFAA), 260–280 (VGGM…TEPL), 282–302 (FLFM…TGIS), 303–323 (LFVA…GAID), and 339–359 (MLLV…SLVI). Residues 390–472 (TQLATNYIAA…KKVVARGPVA (83 aa)) form the PTS EIIB type-1 domain. Residue Cys-412 is the Phosphocysteine intermediate; for EIIB activity of the active site. Cys-412 is subject to Phosphocysteine; by EIIA. Residues 517-621 (DEAFASKAVG…SMISPVVCSN (105 aa)) enclose the PTS EIIA type-1 domain. The Zn(2+) site is built by His-554 and His-569. The active-site Tele-phosphohistidine intermediate; for EIIA activity is the His-569. Residue His-569 is modified to Phosphohistidine; by HPr.

Requires Zn(2+) as cofactor. Post-translationally, 60% of isolated protein was N-formylated.

The protein localises to the cell inner membrane. The catalysed reaction is N(pros)-phospho-L-histidyl-[protein] + N-acetyl-D-glucosamine(out) = N-acetyl-D-glucosamine 6-phosphate(in) + L-histidyl-[protein]. Its activity is regulated as follows. P-chloromercuribenzoate inhibits the accumulation of both N-acetyl-D-glucosamine and antibiotic streptozotocin (2-deoxy-2-(3-methyl-3-nitrosoureido)-D-glucopyranose). N-acetyl-D-glucosamine is a competitive inhibitor for the uptake of streptozotocin. Functionally, the phosphoenolpyruvate-dependent sugar phosphotransferase system (sugar PTS), a major carbohydrate active transport system, catalyzes the phosphorylation of incoming sugar substrates concomitantly with their translocation across the cell membrane. This system is involved in N-acetylglucosamine transport. It can also transport and phosphorylate the antibiotic streptozotocin. Could play a significant role in the recycling of peptidoglycan. The sequence is that of PTS system N-acetylglucosamine-specific EIICBA component from Escherichia coli (strain K12).